A 340-amino-acid polypeptide reads, in one-letter code: PRKC apoptosis WT1 regulator protein (340 aa).

A compositionally biased stretch (polar residues) spans 1 to 18; that stretch reads MATGGYRTSSGLGGSTTD. The segment at 1 to 253 is disordered; that stretch reads MATGGYRTSS…TDRSGFPRYN (253 aa). Residues 47 to 82 show a composition bias toward low complexity; the sequence is SDAAGKPPAGALGTPAAAAANELNNNLPGGAPAAPA. Positions 68–72 match the B30.2/SPRY domain-binding motif motif; sequence ELNNN. Serine 108 is subject to Phosphoserine. Positions 145–161 match the Nuclear localization signal motif; that stretch reads RKGKGQIEKRKLREKRR. The selective for apoptosis induction in cancer cells (SAC) stretch occupies residues 145–203; the sequence is RKGKGQIEKRKLREKRRSTGVVNIPAAECLDEYEDDEAGQKERKREDAITQQNTIQNEA. Position 163 is a phosphothreonine; by PKA (threonine 163). Over residues 182–192 the composition is skewed to basic and acidic residues; sequence AGQKERKREDA. A coiled-coil region spans residues 186 to 206; the sequence is ERKREDAITQQNTIQNEAVNL. The segment covering 193–203 has biased composition (polar residues); sequence ITQQNTIQNEA. Serine 231 carries the post-translational modification Phosphoserine. Residues 242–253 show a composition bias toward basic and acidic residues; that stretch reads SRTDRSGFPRYN. Residues 300 to 340 form a leucine-zipper region; sequence IGKLKEEIDLLNRDLDDIEDENEQLKQENKTLLKVVGQLTR.

In terms of assembly, homooligomer. Interacts (via the C-terminal region) with WT1. Interacts with THAP1. Interacts with AATF. Interacts with BACE1. Interacts with SPSB1 (via B30.2/SPRY domain); this interaction is direct and occurs in association with the Elongin BC complex. Interacts with SPSB2 (via B30.2/SPRY domain); this interaction occurs in association with the Elongin BC complex. Interacts with SPSB4 (via B30.2/SPRY domain); this interaction occurs in association with the Elongin BC complex. Component of a ternary complex composed of SQSTM1 and PRKCZ. Interacts with actin. In terms of processing, preferentially phosphorylated at the Thr-163 by PKC in cancer cells. As to expression, widely expressed. Expression is elevated in various neurodegenerative diseases such as amyotrophic lateral sclerosis, Alzheimer, Parkinson and Huntington diseases and stroke. Down-regulated in several cancers.

It is found in the cytoplasm. It localises to the nucleus. Pro-apoptotic protein capable of selectively inducing apoptosis in cancer cells, sensitizing the cells to diverse apoptotic stimuli and causing regression of tumors in animal models. Induces apoptosis in certain cancer cells by activation of the Fas prodeath pathway and coparallel inhibition of NF-kappa-B transcriptional activity. Inhibits the transcriptional activation and augments the transcriptional repression mediated by WT1. Down-regulates the anti-apoptotic protein BCL2 via its interaction with WT1. Also seems to be a transcriptional repressor by itself. May be directly involved in regulating the amyloid precursor protein (APP) cleavage activity of BACE1. This Homo sapiens (Human) protein is PRKC apoptosis WT1 regulator protein (PAWR).